The chain runs to 604 residues: UvrABC system protein C (604 aa).

The region spanning 17–95 (AQPGVYRMLN…IKSLAPRYNI (79 aa)) is the GIY-YIG domain. Residues 204-239 (DEVLKTIEQKMFTASDQQDYEQAAQLRDQMQALRKI) form the UVR domain.

This sequence belongs to the UvrC family. Interacts with UvrB in an incision complex.

It is found in the cytoplasm. The UvrABC repair system catalyzes the recognition and processing of DNA lesions. UvrC both incises the 5' and 3' sides of the lesion. The N-terminal half is responsible for the 3' incision and the C-terminal half is responsible for the 5' incision. The polypeptide is UvrABC system protein C (Nitrosomonas europaea (strain ATCC 19718 / CIP 103999 / KCTC 2705 / NBRC 14298)).